The primary structure comprises 246 residues: Probable transcriptional regulatory protein HS_0508 (246 aa).

This sequence belongs to the TACO1 family.

It localises to the cytoplasm. The sequence is that of Probable transcriptional regulatory protein HS_0508 from Histophilus somni (strain 129Pt) (Haemophilus somnus).